Here is a 46-residue protein sequence, read N- to C-terminus: Mu-segestritoxin-Sf1b (46 aa).

4 disulfides stabilise this stretch: Cys3/Cys19, Cys10/Cys22, Cys18/Cys42, and Cys24/Cys40. Positions 31–33 (RPW) are keys region for toxin activity.

This sequence belongs to the neurotoxin 16 (SFI) family. As to expression, expressed by the venom gland.

It localises to the secreted. Functionally, insecticidal toxin. Causes flaccid paralysis followed by death when injected into Heliothis virescens larvae. Does not induce any toxic effects when injected intravenously into adult mice at a dose of 1.25 mg/kg body weight. The protein is Mu-segestritoxin-Sf1b of Segestria florentina (Tube-web spider).